The chain runs to 409 residues: Palmitoyltransferase ZDHHC23 (409 aa).

The Cytoplasmic portion of the chain corresponds to 1-87 (MTQKGSMKPV…RIPWLRGAKK (87 aa)). Residues 88–106 (VNISIIPPLVLLPVFLHVA) form a helical membrane-spanning segment. Residues 107-109 (SWH) lie on the Lumenal side of the membrane. A helical transmembrane segment spans residues 110–132 (FLLGVVVLTSLPVLALWYYYLTH). Residues 133-136 (RRKE) are Cytoplasmic-facing. The helical transmembrane segment at 137 to 157 (QTLFFLSLGLFSLGYMYYVFL) threads the bilayer. Residues 158–165 (QEVVPKGR) are Lumenal-facing. Residues 166 to 186 (VGPVQLAVLTCGLFLILLALH) form a helical membrane-spanning segment. At 187 to 302 (RAKKNPGYLS…NSCVGESNHQ (116 aa)) the chain is on the cytoplasmic side. A disordered region spans residues 215–255 (RKGQEKTKGFPGADMSGSLNNRTTKDDPKGSSKMPAGSPTK). Residues 259–309 (DWCAKCQLVRPARAWHCRICGICVRRMDHHCVWINSCVGESNHQAFILALL) form the DHHC domain. The active-site S-palmitoyl cysteine intermediate is the C289. A helical membrane pass occupies residues 303–323 (AFILALLIFLLTSVYGITLTL). Residues 324–331 (DTICRDRS) are Lumenal-facing. A helical membrane pass occupies residues 332-352 (VFTALFYCPGVYANYSSALSF). Residue T353 is a topological domain, cytoplasmic. Residues 354–374 (CVWYSVIITAGMAYIFLIQLI) traverse the membrane as a helical segment. The Lumenal segment spans residues 375 to 409 (NISYNVTEREVQQALRQKTGRRLLCGLIVDTGLLG).

It belongs to the DHHC palmitoyltransferase family. Interacts with NOS1.

The protein localises to the golgi apparatus membrane. It is found in the golgi apparatus. It localises to the trans-Golgi network membrane. It carries out the reaction L-cysteinyl-[protein] + hexadecanoyl-CoA = S-hexadecanoyl-L-cysteinyl-[protein] + CoA. Its function is as follows. Palmitoyltransferase that could catalyze the addition of palmitate onto various protein substrates and be involved in a variety of cellular processes. Palmitoyltransferase that mediates palmitoylation of KCNMA1, regulating localization of KCNMA1 to the plasma membrane. May be involved in NOS1 regulation and targeting to the synaptic membrane. The sequence is that of Palmitoyltransferase ZDHHC23 from Homo sapiens (Human).